A 130-amino-acid polypeptide reads, in one-letter code: Small ribosomal subunit protein bS16 (130 aa).

Over residues 98-109 (AAAKQAAKDAAE) the composition is skewed to basic and acidic residues. The tract at residues 98–130 (AAAKQAAKDAAEAKAAAAAEAEAPAADAEASEG) is disordered. The segment covering 110 to 130 (AKAAAAAEAEAPAADAEASEG) has biased composition (low complexity).

Belongs to the bacterial ribosomal protein bS16 family.

In Synechococcus sp. (strain CC9902), this protein is Small ribosomal subunit protein bS16.